A 374-amino-acid chain; its full sequence is Centrosomal protein of 41 kDa (374 aa).

The 98-residue stretch at 176-273 (PDCPYLLLDV…VAQKFPEGMT (98 aa)) folds into the Rhodanese domain. 2 disordered regions span residues 279-301 (ISCL…QTSQ) and 329-374 (ETSS…RPWK). Over residues 329-349 (ETSSRLSSRMSTSSARSKAST) the composition is skewed to low complexity.

It belongs to the CEP41 family. In terms of tissue distribution, expressed in various ciliary organs, including Kupffer's vesicle, ear and heart, as well as brain and kidney.

The protein localises to the cytoplasm. It localises to the cytoskeleton. Its subcellular location is the microtubule organizing center. It is found in the centrosome. The protein resides in the cell projection. The protein localises to the cilium. It localises to the cilium basal body. Its function is as follows. Required during ciliogenesis for tubulin glutamylation in cilium. Probably acts by participating in the transport of tubulin polyglutamylases between the basal body and the cilium. This Danio rerio (Zebrafish) protein is Centrosomal protein of 41 kDa (cep41).